A 698-amino-acid polypeptide reads, in one-letter code: Putative transposon gamma-delta 80.3 kDa protein (698 aa).

The polypeptide is Putative transposon gamma-delta 80.3 kDa protein (tnpX) (Escherichia coli (strain K12)).